A 469-amino-acid polypeptide reads, in one-letter code: tRNA (guanine(10)-N(2))-methyltransferase (469 aa).

Belongs to the class I-like SAM-binding methyltransferase superfamily. TRM11 methyltransferase family. As to quaternary structure, interacts with trm112.

The protein resides in the cytoplasm. Its subcellular location is the nucleus. The enzyme catalyses guanosine(10) in tRNA + S-adenosyl-L-methionine = N(2)-methylguanosine(10) in tRNA + S-adenosyl-L-homocysteine + H(+). Catalytic subunit of an S-adenosyl-L-methionine-dependent tRNA methyltransferase complex that mediates the methylation of the guanosine nucleotide at position 10 (m2G10) in tRNAs. This Schizosaccharomyces pombe (strain 972 / ATCC 24843) (Fission yeast) protein is tRNA (guanine(10)-N(2))-methyltransferase (trm11).